Consider the following 271-residue polypeptide: Chymotrypsin BII (271 aa).

The first 15 residues, 1–15 (MIGKLSLLLVCVAVA), serve as a signal peptide directing secretion. Residues 16–45 (SGNPAAGKPWHWKSPKPLVDPRIHVNATPR) constitute a propeptide, activation peptide. Residues 46 to 268 (IVGGVEATPH…YLDWIEQKTG (223 aa)) enclose the Peptidase S1 domain. A disulfide bond links cysteine 71 and cysteine 87. Active-site charge relay system residues include histidine 86 and aspartate 132. 2 disulfides stabilise this stretch: cysteine 196-cysteine 209 and cysteine 219-cysteine 245. The active-site Charge relay system is serine 223.

It belongs to the peptidase S1 family.

It localises to the secreted. It is found in the extracellular space. The enzyme catalyses Preferential cleavage: Tyr-|-Xaa, Trp-|-Xaa, Phe-|-Xaa, Leu-|-Xaa.. Functionally, serine protease with chymotryptic and collagenolytic activities. The chain is Chymotrypsin BII from Penaeus vannamei (Whiteleg shrimp).